The primary structure comprises 315 residues: Ribonuclease Z (315 aa).

Positions 61, 63, 65, 66, 151, 219, and 278 each coordinate Zn(2+). Residue Asp-65 is the Proton acceptor of the active site.

Belongs to the RNase Z family. In terms of assembly, homodimer. Zn(2+) is required as a cofactor.

It catalyses the reaction Endonucleolytic cleavage of RNA, removing extra 3' nucleotides from tRNA precursor, generating 3' termini of tRNAs. A 3'-hydroxy group is left at the tRNA terminus and a 5'-phosphoryl group is left at the trailer molecule.. Zinc phosphodiesterase, which displays some tRNA 3'-processing endonuclease activity. Probably involved in tRNA maturation, by removing a 3'-trailer from precursor tRNA. The protein is Ribonuclease Z of Clostridium botulinum (strain Alaska E43 / Type E3).